Consider the following 123-residue polypeptide: UPF0231 protein plu3616 (123 aa).

It belongs to the UPF0231 family.

This Photorhabdus laumondii subsp. laumondii (strain DSM 15139 / CIP 105565 / TT01) (Photorhabdus luminescens subsp. laumondii) protein is UPF0231 protein plu3616.